The chain runs to 471 residues: uncharacterized protein (471 aa).

11 helical membrane-spanning segments follow: residues 15–35 (LWGPPLIILLTGTGLYFTILL), 66–86 (PLQALTSALSSTIGAANIVGV), 89–109 (AIMFGGPGAVFWMWLIALFAM), 147–167 (WLGVFFSVALIVELIPSIMVQ), 179–199 (FSFNKIYAGIGIAFLIGLVVI), 210–230 (EFVVPLMAGAYAGAGLLIVLM), 237–257 (AFFSLVFSNAFTSSSAVGGFA), 303–323 (VIGIVIDTLIICTTTAFIVLA), 353–373 (GYFVSVSLVFFVVSTIMVVIF), 386–406 (LAGHVIKFVYLAAIIIGAAGG), and 410–430 (IWGVLDLALVFIVVPNVIALL).

Belongs to the alanine or glycine:cation symporter (AGCS) (TC 2.A.25) family.

It localises to the cell membrane. This is an uncharacterized protein from Bacillus subtilis (strain 168).